The primary structure comprises 113 residues: Ig kappa chain V-II region 26-10 (113 aa).

Positions 1–23 (DVVMTQTPLSLPVSLGDQASISC) are framework-1. C23 and C93 are oxidised to a cystine. The tract at residues 24 to 39 (RSSQSLVHSNGNTYLN) is complementarity-determining-1. Residues 40–54 (WYLQKAGQSPKLLIY) are framework-2. The tract at residues 55–61 (KVSNRFS) is complementarity-determining-2. The segment at 62 to 93 (GVPDRFSGSGSGTDFTLKISRVEAEDLGIYFC) is framework-3. The interval 94–102 (SQTTHVPPT) is complementarity-determining-3. The interval 103–112 (FGGGTKLEIK) is framework-4.

This Mus musculus (Mouse) protein is Ig kappa chain V-II region 26-10.